We begin with the raw amino-acid sequence, 70 residues long: Large ribosomal subunit protein bL32 (70 aa).

A compositionally biased stretch (basic residues) spans 1–19 (MAVPKRKTTPSRRGMRRSH). The segment at 1-21 (MAVPKRKTTPSRRGMRRSHQA) is disordered.

The protein belongs to the bacterial ribosomal protein bL32 family.

The chain is Large ribosomal subunit protein bL32 from Gluconobacter oxydans (strain 621H) (Gluconobacter suboxydans).